The following is a 474-amino-acid chain: Adenosylhomocysteinase (474 aa).

3 residues coordinate substrate: Thr53, Asp135, and Glu197. 198–200 (TTT) provides a ligand contact to NAD(+). Substrate contacts are provided by Lys227 and Asp231. Residues Asn232, 261 to 266 (GYGDVG), Glu284, Asn319, 340 to 342 (IGH), and Asn388 contribute to the NAD(+) site.

This sequence belongs to the adenosylhomocysteinase family. It depends on NAD(+) as a cofactor.

The protein resides in the cytoplasm. The enzyme catalyses S-adenosyl-L-homocysteine + H2O = L-homocysteine + adenosine. The protein operates within amino-acid biosynthesis; L-homocysteine biosynthesis; L-homocysteine from S-adenosyl-L-homocysteine: step 1/1. May play a key role in the regulation of the intracellular concentration of adenosylhomocysteine. The protein is Adenosylhomocysteinase of Corynebacterium glutamicum (strain ATCC 13032 / DSM 20300 / JCM 1318 / BCRC 11384 / CCUG 27702 / LMG 3730 / NBRC 12168 / NCIMB 10025 / NRRL B-2784 / 534).